Consider the following 248-residue polypeptide: 14-3-3 protein sigma (248 aa).

Phosphoserine occurs at positions 5, 74, and 248.

Belongs to the 14-3-3 family. Homodimer. Interacts with KRT17 and SAMSN1. Found in a complex with XPO7, EIF4A1, ARHGAP1, VPS26A, VPS29 and VPS35. Interacts with GAB2. Interacts with SRPK2. Interacts with COPS6. Interacts with COP1; this interaction leads to proteasomal degradation. Interacts with the 'Thr-369' phosphorylated form of DAPK2. Interacts with PI4KB. Interacts with SLITRK1. Interacts with LRRK2; this interaction is dependent on LRRK2 phosphorylation. Interacts with PKP3 (via N-terminus); the interaction maintains the cytoplasmic pool of PKP3, facilitates PKP3 exchange at desmosomes and restricts PKP3 localization to existing desmosome cell junctions. Interacts with LCP2. Post-translationally, ubiquitinated. Ubiquitination by RFFL induces proteasomal degradation and indirectly regulates p53/TP53 activation. Present mainly in tissues enriched in stratified squamous keratinizing epithelium.

It localises to the cytoplasm. Its subcellular location is the nucleus. It is found in the secreted. In terms of biological role, adapter protein implicated in the regulation of a large spectrum of both general and specialized signaling pathways. Binds to a large number of partners, usually by recognition of a phosphoserine or phosphothreonine motif. Binding generally results in the modulation of the activity of the binding partner. Promotes cytosolic retention of GBP1 GTPase by binding to phosphorylated GBP1, thereby inhibiting the innate immune response. Also acts as a TP53/p53-regulated inhibitor of G2/M progression. When bound to KRT17, regulates protein synthesis and epithelial cell growth by stimulating Akt/mTOR pathway. Acts to maintain desmosome cell junction adhesion in epithelial cells via interacting with and sequestering PKP3 to the cytoplasm, thereby restricting its translocation to existing desmosome structures and therefore maintaining desmosome protein homeostasis. Also acts to facilitate PKP3 exchange at desmosome plaques, thereby maintaining keratinocyte intercellular adhesion. May also regulate MDM2 autoubiquitination and degradation and thereby activate p53/TP53. The protein is 14-3-3 protein sigma (SFN) of Homo sapiens (Human).